The chain runs to 138 residues: Protein NrdI (138 aa).

It belongs to the NrdI family.

Probably involved in ribonucleotide reductase function. The protein is Protein NrdI of Mycobacterium leprae (strain TN).